Here is a 90-residue protein sequence, read N- to C-terminus: Albumin (90 aa).

Position 5 is a phosphoserine (S5). Ca(2+)-binding residues include E6 and D13. The Albumin domain maps to 25–90 (LLRHLVDEPQ…LVASTQAALA (66 aa)). A Phosphoserine modification is found at S61. 2 positions are modified to phosphothreonine: T62 and T64. Residue K80 is modified to N6-methyllysine.

The protein belongs to the ALB/AFP/VDB family. As to quaternary structure, interacts with FCGRT; this interaction regulates ALB homeostasis. Interacts with TASOR. In plasma, occurs in a covalently-linked complex with chromophore-bound alpha-1-microglobulin; this interaction does not prevent fatty acid binding to ALB. In terms of tissue distribution, plasma.

The protein resides in the secreted. In terms of biological role, binds water, Ca(2+), Na(+), K(+), fatty acids, hormones, bilirubin and drugs. Its main function is the regulation of the colloidal osmotic pressure of blood. Major zinc transporter in plasma, typically binds about 80% of all plasma zinc. Major calcium and magnesium transporter in plasma, binds approximately 45% of circulating calcium and magnesium in plasma. Potentially has more than two calcium-binding sites and might additionally bind calcium in a non-specific manner. The shared binding site between zinc and calcium suggests a crosstalk between zinc and calcium transport in the blood. The rank order of affinity is zinc &gt; calcium &gt; magnesium. Binds to the bacterial siderophore enterobactin and inhibits enterobactin-mediated iron uptake of E.coli from ferric transferrin, and may thereby limit the utilization of iron and growth of enteric bacteria such as E.coli. Does not prevent iron uptake by the bacterial siderophore aerobactin. In Capra hircus (Goat), this protein is Albumin.